Consider the following 237-residue polypeptide: MAVEGGMKCVKFLLYVLLLVFCACAVGLIAVGVGTHLVLNQTITHGATPSFLLPVVIIAVGAFLFLVAFVGCCGACKENYCLMITFAIFLSLIMLVEVAAAIAGYVFRDKVRSEFNKDFRQQMKNYPKDNQTASILDKMQKDFECCGAANYTDWEKILAVTNKVPDSCCVNITHNCGINFVVKDIHTEGCVEKIAAWLRKNVLVVAAAALGIAFVEILGIVLACCLVKSIRSGYEVM.

The Cytoplasmic segment spans residues 1 to 11 (MAVEGGMKCVK). A helical membrane pass occupies residues 12 to 32 (FLLYVLLLVFCACAVGLIAVG). Residues 33-51 (VGTHLVLNQTITHGATPSF) are Extracellular-facing. An N-linked (GlcNAc...) asparagine glycan is attached at Asn-40. A helical membrane pass occupies residues 52 to 72 (LLPVVIIAVGAFLFLVAFVGC). Over 73-81 (CGACKENYC) the chain is Cytoplasmic. Residues 82–102 (LMITFAIFLSLIMLVEVAAAI) form a helical membrane-spanning segment. Over 103 to 202 (AGYVFRDKVR…KIAAWLRKNV (100 aa)) the chain is Extracellular. N-linked (GlcNAc...) asparagine glycosylation is found at Asn-130, Asn-150, and Asn-171. Residues 203 to 223 (LVVAAAALGIAFVEILGIVLA) traverse the membrane as a helical segment. Topologically, residues 224–237 (CCLVKSIRSGYEVM) are cytoplasmic. Positions 233-237 (GYEVM) match the Lysosomal targeting motif motif.

Belongs to the tetraspanin (TM4SF) family. In terms of assembly, interacts with TIMP1 and ITGB1 and recruits TIMP1 to ITGB1. Interacts with CD9. Identified in a complex with CD9 and ITGB3. Interacts with PMEL. Interacts with KDR/VEGFR2; identified in a complex with ITGB1 and KDR/VEGFR2 and is required to recruit KDR to ITGB1 complexes. Interacts with SYT7. In terms of processing, palmitoylated at a low, basal level in unstimulated platelets. The level of palmitoylation increases when platelets are activated by thrombin (in vitro).

The protein resides in the cell membrane. It localises to the lysosome membrane. The protein localises to the late endosome membrane. Its subcellular location is the endosome. It is found in the multivesicular body. The protein resides in the melanosome. It localises to the secreted. The protein localises to the extracellular exosome. Its subcellular location is the cell surface. Its function is as follows. Functions as a cell surface receptor for TIMP1 and plays a role in the activation of cellular signaling cascades. Plays a role in the activation of ITGB1 and integrin signaling, leading to the activation of AKT, FAK/PTK2 and MAP kinases. Promotes cell survival, reorganization of the actin cytoskeleton, cell adhesion, spreading and migration, via its role in the activation of AKT and FAK/PTK2. Plays a role in VEGFA signaling via its role in regulating the internalization of KDR/VEGFR2. Plays a role in intracellular vesicular transport processes, and is required for normal trafficking of the PMEL luminal domain that is essential for the development and maturation of melanocytes. Plays a role in the adhesion of leukocytes onto endothelial cells via its role in the regulation of SELP trafficking. May play a role in mast cell degranulation in response to Ms4a2/FceRI stimulation, but not in mast cell degranulation in response to other stimuli. This is CD63 antigen (CD63) from Bos taurus (Bovine).